The following is a 430-amino-acid chain: Enolase (430 aa).

Q163 is a binding site for (2R)-2-phosphoglycerate. The active-site Proton donor is E205. Mg(2+)-binding residues include D242, E285, and D312. (2R)-2-phosphoglycerate is bound by residues K337, R366, S367, and K388. K337 (proton acceptor) is an active-site residue.

Belongs to the enolase family. The cofactor is Mg(2+).

Its subcellular location is the cytoplasm. The protein resides in the secreted. The protein localises to the cell surface. The catalysed reaction is (2R)-2-phosphoglycerate = phosphoenolpyruvate + H2O. It participates in carbohydrate degradation; glycolysis; pyruvate from D-glyceraldehyde 3-phosphate: step 4/5. Catalyzes the reversible conversion of 2-phosphoglycerate (2-PG) into phosphoenolpyruvate (PEP). It is essential for the degradation of carbohydrates via glycolysis. In Maridesulfovibrio salexigens (strain ATCC 14822 / DSM 2638 / NCIMB 8403 / VKM B-1763) (Desulfovibrio salexigens), this protein is Enolase.